The following is a 148-amino-acid chain: 3-dehydroquinate dehydratase (148 aa).

Tyr-23 acts as the Proton acceptor in catalysis. Positions 75, 81, and 88 each coordinate substrate. Catalysis depends on His-101, which acts as the Proton donor. Residues 102–103 and Arg-112 each bind substrate; that span reads LS.

Belongs to the type-II 3-dehydroquinase family. Homododecamer.

The enzyme catalyses 3-dehydroquinate = 3-dehydroshikimate + H2O. The protein operates within metabolic intermediate biosynthesis; chorismate biosynthesis; chorismate from D-erythrose 4-phosphate and phosphoenolpyruvate: step 3/7. Catalyzes a trans-dehydration via an enolate intermediate. In Xylella fastidiosa (strain M23), this protein is 3-dehydroquinate dehydratase.